We begin with the raw amino-acid sequence, 384 residues long: S-adenosylmethionine synthase (384 aa).

Residue His-15 participates in ATP binding. Position 17 (Asp-17) interacts with Mg(2+). Residue Glu-43 participates in K(+) binding. Residues Glu-56 and Gln-99 each contribute to the L-methionine site. The segment at 99 to 109 (QSPDINQGVDR) is flexible loop. ATP is bound by residues 164–166 (DAK), 230–231 (RF), Asp-239, 245–246 (RK), Ala-262, and Lys-266. Asp-239 provides a ligand contact to L-methionine. Lys-270 contributes to the L-methionine binding site.

The protein belongs to the AdoMet synthase family. In terms of assembly, homotetramer; dimer of dimers. It depends on Mg(2+) as a cofactor. Requires K(+) as cofactor.

The protein resides in the cytoplasm. The catalysed reaction is L-methionine + ATP + H2O = S-adenosyl-L-methionine + phosphate + diphosphate. Its pathway is amino-acid biosynthesis; S-adenosyl-L-methionine biosynthesis; S-adenosyl-L-methionine from L-methionine: step 1/1. Its function is as follows. Catalyzes the formation of S-adenosylmethionine (AdoMet) from methionine and ATP. The overall synthetic reaction is composed of two sequential steps, AdoMet formation and the subsequent tripolyphosphate hydrolysis which occurs prior to release of AdoMet from the enzyme. The sequence is that of S-adenosylmethionine synthase from Photobacterium profundum (strain SS9).